The sequence spans 466 residues: Ribulose bisphosphate carboxylase (466 aa).

Asn-111 contacts substrate. Lys-166 acts as the Proton acceptor in catalysis. Lys-168 lines the substrate pocket. Positions 191, 193, and 194 each coordinate Mg(2+). Lys-191 is subject to N6-carboxylysine. The active-site Proton acceptor is His-287. Residues Arg-288, His-321, and Ser-368 each contribute to the substrate site.

It belongs to the RuBisCO large chain family. Type II subfamily. In terms of assembly, homodimer. The cofactor is Mg(2+).

It carries out the reaction 2 (2R)-3-phosphoglycerate + 2 H(+) = D-ribulose 1,5-bisphosphate + CO2 + H2O. The catalysed reaction is D-ribulose 1,5-bisphosphate + O2 = 2-phosphoglycolate + (2R)-3-phosphoglycerate + 2 H(+). In terms of biological role, ruBisCO catalyzes two reactions: the carboxylation of D-ribulose 1,5-bisphosphate, the primary event in carbon dioxide fixation, as well as the oxidative fragmentation of the pentose substrate. Both reactions occur simultaneously and in competition at the same active site. The polypeptide is Ribulose bisphosphate carboxylase (cbbM) (Rhodospirillum rubrum).